A 708-amino-acid chain; its full sequence is ARF GTPase-activating protein GIT2 (708 aa).

The Arf-GAP domain maps to 1–124 (MSKRLRSSDV…AFVHRLPCRE (124 aa)). The C4-type zinc finger occupies 11-34 (CADCNGPDPSWASVNRGTFICDEC). ANK repeat units lie at residues 132–161 (DLSK…QANF), 166–195 (KGST…DPGT), and 199–228 (SGKT…ELTD). Residues 376–592 (STQHSTESQD…SPTLPSTEDV (217 aa)) form a disordered region. A compositionally biased stretch (acidic residues) spans 384–401 (QDNDQPDYDSVASDEDTD). Residues serine 393 and serine 396 each carry the phosphoserine modification. The residue at position 400 (threonine 400) is a Phosphothreonine. Residues 407-438 (SKANRQKLQTLQSENSSLRRQATASACQVQTG) are compositionally biased toward polar residues. Over residues 504 to 518 (TSSSSLPSFPSTLSW) the composition is skewed to low complexity. Residues serine 508, serine 511, and serine 519 each carry the phosphoserine modification. Positions 519-532 (SRDESARRASRLEK) are enriched in basic and acidic residues. Threonine 536 is subject to Phosphothreonine. Serine 563 carries the post-translational modification Phosphoserine.

As to quaternary structure, may form heterooligomers with GIT1. Directly interacts with protein Piccolo/PCLO. Interacts with PPFIA1 and PPFIA2. Interacts with ARHGEF7. Identified in a complex with ARHGEF6 and BIN2. Interacts with PAK3. Interacts with PXN/paxillin. Interacts with TGFB1I1. Forms a complex with EFNB1 and GRB4/NCK2. Post-translationally, tyrosine phosphorylated when coexpressed in cells with PTK2/FAK1 and SRC. In terms of tissue distribution, expressed in the brain (at protein level).

In terms of biological role, GTPase-activating protein for ADP ribosylation factor family members, including ARF1. The protein is ARF GTPase-activating protein GIT2 (Git2) of Mus musculus (Mouse).